A 382-amino-acid polypeptide reads, in one-letter code: Apolipoprotein A-IV (382 aa).

A signal peptide spans 1 to 20 (MFLKAVVLTLSLVAVTGAQA). Repeat copies occupy residues 33–54 (DYFS…KSEL), 60–81 (ALFQ…KKLV), 82–103 (SFAM…EEIR), 115–136 (PHAD…QRLG), 137–158 (PYAE…NQLT), 159–180 (AHAQ…ASLT), 181–202 (PYAD…GHLT), 203–224 (PYAD…RSLA), 225–246 (PYAQ…FQMK), 247–268 (KNAE…QKLV), 269–286 (PVAE…EELQ), 287–308 (KSLA…RNMG), and 309–330 (PYGE…QKLG). Residues 33 to 330 (DYFSQLSNNA…QVEELRQKLG (298 aa)) form a 13 X 22 AA approximate tandem repeats region.

This sequence belongs to the apolipoprotein A1/A4/E family. Homodimer. Post-translationally, phosphorylation sites are present in the extracellular medium.

It localises to the secreted. In terms of biological role, may have a role in chylomicrons and VLDL secretion and catabolism. Required for efficient activation of lipoprotein lipase by ApoC-II; potent activator of LCAT. Apoa-IV is a major component of HDL and chylomicrons. The chain is Apolipoprotein A-IV (APOA4) from Mirounga angustirostris (Northern elephant seal).